Here is a 157-residue protein sequence, read N- to C-terminus: 2-C-methyl-D-erythritol 2,4-cyclodiphosphate synthase (157 aa).

A divalent metal cation contacts are provided by D8 and H10. Residues 8–10 and 34–35 each bind 4-CDP-2-C-methyl-D-erythritol 2-phosphate; these read DVH and HS. Position 42 (H42) interacts with a divalent metal cation. 4-CDP-2-C-methyl-D-erythritol 2-phosphate-binding positions include 56 to 58, 132 to 135, and R142; these read DIG and TTNE.

This sequence belongs to the IspF family. In terms of assembly, homotrimer. Requires a divalent metal cation as cofactor.

The catalysed reaction is 4-CDP-2-C-methyl-D-erythritol 2-phosphate = 2-C-methyl-D-erythritol 2,4-cyclic diphosphate + CMP. Its pathway is isoprenoid biosynthesis; isopentenyl diphosphate biosynthesis via DXP pathway; isopentenyl diphosphate from 1-deoxy-D-xylulose 5-phosphate: step 4/6. In terms of biological role, involved in the biosynthesis of isopentenyl diphosphate (IPP) and dimethylallyl diphosphate (DMAPP), two major building blocks of isoprenoid compounds. Catalyzes the conversion of 4-diphosphocytidyl-2-C-methyl-D-erythritol 2-phosphate (CDP-ME2P) to 2-C-methyl-D-erythritol 2,4-cyclodiphosphate (ME-CPP) with a corresponding release of cytidine 5-monophosphate (CMP). The protein is 2-C-methyl-D-erythritol 2,4-cyclodiphosphate synthase of Pelodictyon phaeoclathratiforme (strain DSM 5477 / BU-1).